Consider the following 421-residue polypeptide: Histidine--tRNA ligase (421 aa).

The protein belongs to the class-II aminoacyl-tRNA synthetase family. In terms of assembly, homodimer.

Its subcellular location is the cytoplasm. It carries out the reaction tRNA(His) + L-histidine + ATP = L-histidyl-tRNA(His) + AMP + diphosphate + H(+). This Coxiella burnetii (strain CbuG_Q212) (Coxiella burnetii (strain Q212)) protein is Histidine--tRNA ligase.